A 117-amino-acid polypeptide reads, in one-letter code: Cuticle protein CP1243 (117 aa).

4 tandem repeats follow at residues 1–17 (NYGESGIVYPDGRLVQF), 26–43 (AEIGEAGVVMHDGTHVQF), 67–84 (QPYGYSGIMKPDGNNRQF), and 93–110 (VLVGPSGAVTADGKNVQF).

As to expression, calcified shell.

This Cancer pagurus (Rock crab) protein is Cuticle protein CP1243.